The following is a 143-amino-acid chain: Large ribosomal subunit protein uL11 (143 aa).

This sequence belongs to the universal ribosomal protein uL11 family. As to quaternary structure, part of the ribosomal stalk of the 50S ribosomal subunit. Interacts with L10 and the large rRNA to form the base of the stalk. L10 forms an elongated spine to which L12 dimers bind in a sequential fashion forming a multimeric L10(L12)X complex. One or more lysine residues are methylated.

In terms of biological role, forms part of the ribosomal stalk which helps the ribosome interact with GTP-bound translation factors. This Leptothrix cholodnii (strain ATCC 51168 / LMG 8142 / SP-6) (Leptothrix discophora (strain SP-6)) protein is Large ribosomal subunit protein uL11.